The following is a 247-amino-acid chain: Lipoprotein-releasing system ATP-binding protein LolD 2 (247 aa).

The ABC transporter domain maps to 19–247; sequence LEARKLVKSY…QDGRLQACGG (229 aa). 56-63 is a binding site for ATP; the sequence is GASGSGKT.

The protein belongs to the ABC transporter superfamily. Lipoprotein translocase (TC 3.A.1.125) family. As to quaternary structure, the complex is composed of two ATP-binding proteins (LolD) and two transmembrane proteins (LolC and LolE).

The protein resides in the cell inner membrane. Its function is as follows. Part of the ABC transporter complex LolCDE involved in the translocation of mature outer membrane-directed lipoproteins, from the inner membrane to the periplasmic chaperone, LolA. Responsible for the formation of the LolA-lipoprotein complex in an ATP-dependent manner. The polypeptide is Lipoprotein-releasing system ATP-binding protein LolD 2 (Chlorobaculum tepidum (strain ATCC 49652 / DSM 12025 / NBRC 103806 / TLS) (Chlorobium tepidum)).